The primary structure comprises 366 residues: tRNA 2-selenouridine synthase (366 aa).

The 124-residue stretch at 12–135 folds into the Rhodanese domain; sequence FLNDVPMMDA…MRTFLLDTLH (124 aa). The active-site S-selanylcysteine intermediate is the Cys95.

It belongs to the SelU family. As to quaternary structure, monomer.

The enzyme catalyses 5-methylaminomethyl-2-thiouridine(34) in tRNA + selenophosphate + (2E)-geranyl diphosphate + H2O + H(+) = 5-methylaminomethyl-2-selenouridine(34) in tRNA + (2E)-thiogeraniol + phosphate + diphosphate. It carries out the reaction 5-methylaminomethyl-2-thiouridine(34) in tRNA + (2E)-geranyl diphosphate = 5-methylaminomethyl-S-(2E)-geranyl-thiouridine(34) in tRNA + diphosphate. The catalysed reaction is 5-methylaminomethyl-S-(2E)-geranyl-thiouridine(34) in tRNA + selenophosphate + H(+) = 5-methylaminomethyl-2-(Se-phospho)selenouridine(34) in tRNA + (2E)-thiogeraniol. It catalyses the reaction 5-methylaminomethyl-2-(Se-phospho)selenouridine(34) in tRNA + H2O = 5-methylaminomethyl-2-selenouridine(34) in tRNA + phosphate. Functionally, involved in the post-transcriptional modification of the uridine at the wobble position (U34) of tRNA(Lys), tRNA(Glu) and tRNA(Gln). Catalyzes the conversion of 2-thiouridine (S2U-RNA) to 2-selenouridine (Se2U-RNA). Acts in a two-step process involving geranylation of 2-thiouridine (S2U) to S-geranyl-2-thiouridine (geS2U) and subsequent selenation of the latter derivative to 2-selenouridine (Se2U) in the tRNA chain. The polypeptide is tRNA 2-selenouridine synthase (Pseudomonas savastanoi pv. phaseolicola (strain 1448A / Race 6) (Pseudomonas syringae pv. phaseolicola (strain 1448A / Race 6))).